The following is a 453-amino-acid chain: tRNA-2-methylthio-N(6)-dimethylallyladenosine synthase (453 aa).

The region spanning 4–118 (KKFYIENYGC…IPNLINNFFK (115 aa)) is the MTTase N-terminal domain. Cys-13, Cys-49, Cys-83, Cys-156, Cys-160, and Cys-163 together coordinate [4Fe-4S] cluster. The 247-residue stretch at 142–388 (EEKKITAFVT…NLQKTHSYYR (247 aa)) folds into the Radical SAM core domain. In terms of domain architecture, TRAM spans 390–453 (RKYIGSIQDI…SATLVGDIYV (64 aa)).

The protein belongs to the methylthiotransferase family. MiaB subfamily. As to quaternary structure, monomer. [4Fe-4S] cluster serves as cofactor.

The protein localises to the cytoplasm. It carries out the reaction N(6)-dimethylallyladenosine(37) in tRNA + (sulfur carrier)-SH + AH2 + 2 S-adenosyl-L-methionine = 2-methylsulfanyl-N(6)-dimethylallyladenosine(37) in tRNA + (sulfur carrier)-H + 5'-deoxyadenosine + L-methionine + A + S-adenosyl-L-homocysteine + 2 H(+). Functionally, catalyzes the methylthiolation of N6-(dimethylallyl)adenosine (i(6)A), leading to the formation of 2-methylthio-N6-(dimethylallyl)adenosine (ms(2)i(6)A) at position 37 in tRNAs that read codons beginning with uridine. In Karelsulcia muelleri (strain GWSS) (Sulcia muelleri), this protein is tRNA-2-methylthio-N(6)-dimethylallyladenosine synthase.